The following is a 224-amino-acid chain: Pre-hexon-linking protein VIII (224 aa).

Residue T64 is modified to Phosphothreonine; by host. A propeptide spanning residues 112 to 154 (RQPSPSHIDIKDTMLAGTGIQLGEDIPSVSWIRPDGIFQLGGG) is cleaved from the precursor.

It belongs to the adenoviridae hexon-linking protein family. In terms of assembly, interacts with the peripentonal hexons as well as the hexons in the facets. Part of a complex composed of the core-capsid bridging protein, the endosome lysis protein VI and the hexon-linking protein VIII; these interactions bridge the virus core to the capsid. In terms of processing, cleaved by the viral protease during virion maturation. May cause the middle segment to be shed from the capsid.

It localises to the virion. Its subcellular location is the host nucleus. Its function is as follows. Structural component of the virion that acts as a cement protein on the capsid interior and which glue the peripentonal hexons and group-of-nine hexons together. This Canine adenovirus serotype 1 (strain CLL) (CAdV-1) protein is Pre-hexon-linking protein VIII.